The primary structure comprises 618 residues: DNA mismatch repair protein MutL (618 aa).

A compositionally biased stretch (low complexity) spans 367-378 (EPTAAREPATPR). The segment at 367–402 (EPTAAREPATPRYSGGASGGNGGRQTAGGWPHAQPG) is disordered. The segment covering 382-392 (GASGGNGGRQT) has biased composition (gly residues).

The protein belongs to the DNA mismatch repair MutL/HexB family.

In terms of biological role, this protein is involved in the repair of mismatches in DNA. It is required for dam-dependent methyl-directed DNA mismatch repair. May act as a 'molecular matchmaker', a protein that promotes the formation of a stable complex between two or more DNA-binding proteins in an ATP-dependent manner without itself being part of a final effector complex. The sequence is that of DNA mismatch repair protein MutL from Salmonella choleraesuis (strain SC-B67).